A 163-amino-acid polypeptide reads, in one-letter code: Nucleotide-binding protein APL_1231 (163 aa).

Belongs to the YajQ family.

Its function is as follows. Nucleotide-binding protein. In Actinobacillus pleuropneumoniae serotype 5b (strain L20), this protein is Nucleotide-binding protein APL_1231.